Consider the following 657-residue polypeptide: MEHSGTSEVTGADTAGPDPQLAVTMGFTGFGKKARTFDLEAMFEQTRRTAVERSRKTLEAREKEEEMNREKELRKQIEDMEPAPSSSSAARERSQSSCRDTSSSDSESDDSSDSSDDELIGPPLPPKMVGESVTTVDEGTLGPLPPPLCEEGEDDDDDELDDEGEEDNPVQRIPDSHEITLRHGTKTVSALGLDPSGARLVTGGYDYDVKFWDFAGMDASFKAFRSLQPCECHQIKSLQYSNTGDMILVVSGSSQAKVIDRDGFEVMECIKGDQYIVDMANTKGHTAMLHTDSWHPKIKGEFMTCSNDATVRLWEVENPKKQKSVFKPRTMQGKKVIPTTCTYSRDGNLVAAACQNGSIQIWDRNLTVHPKFHYKQAHDPGTDTSCVAFSYDGNVLASRGGDDTLKLWDVRQFNKPLFSASDLPTLFPMTDCCFSPDDKLIVTGTSVQRGCGSGKLVFLERRTFQRVYEIHITDASVVRCLWHPKLNQIMVGTGNGLAKVYYDPNKSQRGAKLCVVKTQRKAKQAETLTQDYIITPHALPMFREPRQRSTRKQLEKDRLDPLKSHKPEPPVAGPGRGGRVGTHGGTLSSYIVKNIALDKTDDSNPREAILRHAKAAEDNPYWVSPAYSKTQPKTMFAQVESDDEESKNEPEWKKRKI.

2 disordered regions span residues 1 to 21 (MEHSGTSEVTGADTAGPDPQL) and 43 to 172 (FEQT…PVQR). The span at 45-78 (QTRRTAVERSRKTLEAREKEEEMNREKELRKQIE) shows a compositional bias: basic and acidic residues. Low complexity predominate over residues 82–105 (PAPSSSSAARERSQSSCRDTSSSD). Composition is skewed to acidic residues over residues 106-119 (SESDDSSDSSDDEL) and 150-168 (EEGEDDDDDELDDEGEEDN). WD repeat units lie at residues 183-222 (HGTKTVSALGLDPSGARLVTGGYDYDVKFWDFAGMDASFK), 230-271 (CECH…ECIK), 284-324 (GHTA…KQKS), 333-372 (GKKVIPTTCTYSRDGNLVAAACQNGSIQIWDRNLTVHPKF), 379-418 (DPGTDTSCVAFSYDGNVLASRGGDDTLKLWDVRQFNKPLF), 424-469 (PTLF…RVYE), and 472-511 (ITDASVVRCLWHPKLNQIMVGTGNGLAKVYYDPNKSQRGA). A Glycyl lysine isopeptide (Lys-Gly) (interchain with G-Cter in SUMO2) cross-link involves residue Lys-299. Position 455 is an N6-acetyllysine (Lys-455). Residues 543-568 (REPRQRSTRKQLEKDRLDPLKSHKPE) show a composition bias toward basic and acidic residues. Residues 543–584 (REPRQRSTRKQLEKDRLDPLKSHKPEPPVAGPGRGGRVGTHG) are disordered. Positions 574 to 584 (PGRGGRVGTHG) are enriched in gly residues. Thr-582 bears the Phosphothreonine mark. Glycyl lysine isopeptide (Lys-Gly) (interchain with G-Cter in SUMO2) cross-links involve residues Lys-593 and Lys-599. A phosphoserine mark is found at Ser-624 and Ser-641. The tract at residues 634 to 657 (TMFAQVESDDEESKNEPEWKKRKI) is disordered. Basic and acidic residues predominate over residues 647–657 (KNEPEWKKRKI).

The protein belongs to the WD repeat GAD-1 family.

In Mus musculus (Mouse), this protein is WD repeat-containing protein 70 (Wdr70).